We begin with the raw amino-acid sequence, 326 residues long: Zinc finger CCCH domain-containing protein 15 (326 aa).

The segment covering 1–14 (MADGGGGGEAGSGG) has biased composition (gly residues). Residues 1-142 (MADGGGGGEA…SSSGSGSGEV (142 aa)) form a disordered region. Residues 24 to 33 (KPPKNIRKRP) show a composition bias toward basic residues. Residues 47 to 64 (SGAIAAARAKKAPSSTSK) are compositionally biased toward low complexity. Over residues 81–100 (YESSRTIQASTDSRATATLE) the composition is skewed to polar residues. Over residues 104–125 (EFDRDARAIRERQLKQAEESLK) the composition is skewed to basic and acidic residues. The segment at 187-215 (DYQPDICKDYKETGYCGYGDSCKFMHDRG) adopts a C3H1-type zinc-finger fold. The RING-type zinc-finger motif lies at 265–303 (CYICREPFVDPVVTKCKHYFCEHCALKHHSKNKKCFVCN).

In Oryza sativa subsp. japonica (Rice), this protein is Zinc finger CCCH domain-containing protein 15.